A 92-amino-acid chain; its full sequence is Small ribosomal subunit protein uS19c (92 aa).

The protein belongs to the universal ribosomal protein uS19 family.

It localises to the plastid. The protein resides in the chloroplast. Its function is as follows. Protein S19 forms a complex with S13 that binds strongly to the 16S ribosomal RNA. The chain is Small ribosomal subunit protein uS19c (rps19) from Pisum sativum (Garden pea).